The primary structure comprises 2323 residues: C2 domain-containing protein 3 (2323 aa).

6 disordered regions span residues 1-27 (MKQRKGQGPGGGRGRKKRGLSDISPST), 193-215 (RELRENTESSNTQSMIPSRSCRG), 402-426 (WNGLGSPPDSPTPGSDEYCSSDLND), 444-509 (SDVG…HTPA), 537-556 (PDSPHMTPSRKNFAGKPPKP), and 698-745 (KLSS…TKKT). Over residues 200–209 (ESSNTQSMIP) the composition is skewed to polar residues. S453 carries the post-translational modification Phosphoserine. Residues 474–483 (KVVESKEQKQ) show a composition bias toward basic and acidic residues. Positions 504-663 (PGHTPAMSLS…IQSELLSFSS (160 aa)) constitute a C2 1 domain. Over residues 698–735 (KLSSSTQPAPVSAATSSDTILPETGQDTACTRNPQSSN) the composition is skewed to polar residues. Position 713 is a phosphoserine (S713). C2 domains are found at residues 771–903 (SCNL…SRLL), 969–1131 (QPPV…YRED), 1155–1323 (SSGF…TGWY), and 1383–1517 (KEEE…TLTI). Residues 1550–1574 (EPARELDSMDCSSHSESEQHPRKSD) show a composition bias toward basic and acidic residues. 2 disordered regions span residues 1550 to 1599 (EPAR…NSAA) and 1798 to 1824 (LAHTSPKEDGLSSPARNGAIRSQAARH). Polar residues predominate over residues 1584–1599 (LQTSPTSTQVHGNSAA). One can recognise a C2 6 domain in the interval 1598–1726 (AAAQVCPAQE…SGFQFICGWY (129 aa)). S1871 is subject to Phosphoserine. Disordered regions lie at residues 1891–1918 (FSSQSSPAVSQSQESQRDPVAAGTGRQD), 1952–2013 (ALTS…GGML), 2074–2163 (SEVL…SVGW), 2182–2231 (SEAF…EVST), and 2261–2323 (SHSP…TEET). The segment covering 1892–1904 (SSQSSPAVSQSQE) has biased composition (low complexity). 2 stretches are compositionally biased toward polar residues: residues 1952 to 1965 (ALTSQQARSRSRAV) and 2074 to 2083 (SEVLSPQPTE). Residues 2110–2125 (AVSPQPAQGSPSQSGV) are compositionally biased toward low complexity. Residues 2147-2158 (PSLTFSEAQEGS) show a composition bias toward polar residues. Residues 2182-2197 (SEAFSSEFSDSSESFE) are compositionally biased toward low complexity. Positions 2207 to 2216 (SKREDYKDSP) are enriched in basic and acidic residues. Over residues 2222–2231 (QVPTGSEVST) the composition is skewed to polar residues.

As to quaternary structure, interacts with OFD1; OFD1 may act as a negative regulator of C2CD3. Associates with the BBSome complex. Interacts with IFT88, BBS4 and PCM1.

The protein resides in the cytoplasm. It is found in the cytoskeleton. Its subcellular location is the cilium basal body. The protein localises to the microtubule organizing center. It localises to the centrosome. The protein resides in the centriole. Component of the centrioles that acts as a positive regulator of centriole elongation. Promotes assembly of centriolar distal appendage, a structure at the distal end of the mother centriole that acts as an anchor of the cilium, and is required for recruitment of centriolar distal appendages proteins CEP83, SCLT1, CEP89, FBF1 and CEP164. Not required for centriolar satellite integrity or RAB8 activation. Required for primary cilium formation. Required for sonic hedgehog/SHH signaling and for proteolytic processing of GLI3. This chain is C2 domain-containing protein 3 (C2cd3), found in Mus musculus (Mouse).